The chain runs to 1636 residues: MEAVPRMPMIWLDLKEAGDFHFQPAVKKFVLKNYGENPEAYNEELKKLELLRQNAVRVPRDFEGCSVLRKYLGQLHYLQSRVPMGSGQEAAVPVTWTEIFSGKSVAHEDIKYEQACILYNLGALHSMLGAMDKRVSEEGMKVSCTHFQCAAGAFAYLREHFPQAYSVDMSRQILTLNVNLMLGQAQECLLEKSMLDNRKSFLVARISAQVVDYYKEACRALENPDTASLLGRIQKDWKKLVQMKIYYFAAVAHLHMGKQAEEQQKFGERVAYFQSALDKLNEAIKLAKGQPDTVQDALRFTMDVIGGKYNSAKKDNDFIYHEAVPALDTLQPVKGAPLVKPLPVNPTDPAVTGPDIFAKLVPMAAHEASSLYSEEKAKLLREMMAKIEDKNEVLDQFMDSMQLDPETVDNLDAYSHIPPQLMEKCAALSVRPDTVRNLVQSMQVLSGVFTDVEASLKDIRDLLEEDELLEQKFQEAVGQAGAISITSKAELAEVRREWAKYMEVHEKASFTNSELHRAMNLHVGNLRLLSGPLDQVRAALPTPALSPEDKAVLQNLKRILAKVQEMRDQRVSLEQQLRELIQKDDITASLVTTDHSEMKKLFEEQLKKYDQLKVYLEQNLAAQDRVLCALTEANVQYAAVRRVLSDLDQKWNSTLQTLVASYEAYEDLMKKSQEGRDFYADLESKVAALLERTQSTCQAREAARQQLLDRELKKKPPPRPTAPKPLLPRREESEAVEAGDPPEELRSLPPDMVAGPRLPDTFLGSATPLHFPPSPFPSSTGPGPHYLSGPLPPGTYSGPTQLIQPRAPGPHAMPVAPGPALYPAPAYTPELGLVPRSSPQHGVVSSPYVGVGPAPPVAGLPSAPPPQFSGPELAMAVRPATTTVDSIQAPIPSHTAPRPNPTPAPPPPCFPVPPPQPLPTPYTYPAGAKQPIPAQHHFSSGIPAGFPAPRIGPQPQPHPQPHPSQAFGPQPPQQPLPLQHPHLFPPQAPGLLPPQSPYPYAPQPGVLGQPPPPLHTQLYPGPAQDPLPAHSGALPFPSPGPPQPPHPPLAYGPAPSTRPMGPQAAPLTIRGPSSAGQSTPSPHLVPSPAPSPGPGPVPPRPPAAEPPPCLRRGAAAADLLSSSPESQHGGTQSPGGGQPLLQPTKVDAAEGRRPQALRLIERDPYEHPERLRQLQQELEAFRGQLGDVGALDTVWRELQDAQEHDARGRSIAIARCYSLKNRHQDVMPYDSNRVVLRSGKDDYINASCVEGLSPYCPPLVATQAPLPGTAADFWLMVHEQKVSVIVMLVSEAEMEKQKVARYFPTERGQPMVHGALSLALSSVRSTETHVERVLSLQFRDQSLKRSLVHLHFPTWPELGLPDSPSNLLRFIQEVHAHYLHQRPLHTPIIVHCSSGVGRTGAFALLYAAVQEVEAGNGIPELPQLVRRMRQQRKHMLQEKLHLRFCYEAVVRHVEQVLQRHGVPPPCKPLASASISQKNHLPQDSQDLVLGGDVPISSIQATIAKLSIRPPGGLESPVASLPGPAEPPGLPPASLPESTPIPSSSPPPLSSPLPEAPQPKEEPPVPEAPSSGPPSSSLELLASLTPEAFSLDSSLRGKQRMSKHNFLQAHNGQGLRATRPSDDPLSLLDPLWTLNKT.

A BRO1 domain is found at 8–394; it reads PMIWLDLKEA…AKIEDKNEVL (387 aa). TPR repeat units lie at residues 250–283 and 374–407; these read AVAHLHMGKQAEEQQKFGERVAYFQSALDKLNEA and EEKAKLLREMMAKIEDKNEVLDQFMDSMQLDPET. Residues 550–623 adopt a coiled-coil conformation; sequence KAVLQNLKRI…VYLEQNLAAQ (74 aa). A compositionally biased stretch (basic and acidic residues) spans 701 to 714; the sequence is EAARQQLLDRELKK. Disordered stretches follow at residues 701–812 and 888–1151; these read EAAR…GPHA and QAPI…AAEG. Ser733 carries the post-translational modification Phosphoserine. The tract at residues 770-1130 is his; the sequence is HFPPSPFPSS…SSSPESQHGG (361 aa). Composition is skewed to pro residues over residues 898 to 922 and 950 to 962; these read RPNPTPAPPPPCFPVPPPQPLPTPY and RIGPQPQPHPQPH. Arg950 is subject to Omega-N-methylarginine. 6 consecutive repeat copies span residues 953–954, 955–956, 957–958, 959–960, 961–962, and 963–964. Positions 953 to 964 are 6 X 2 AA approximate tandem repeats of P-Q; the sequence is PQPQPHPQPHPS. Composition is skewed to pro residues over residues 983–1002, 1036–1050, and 1083–1109; these read LFPPQAPGLLPPQSPYPYAP, FPSPGPPQPPHPPLA, and HLVPSPAPSPGPGPVPPRPPAAEPPPC. The span at 1120-1131 shows a compositional bias: polar residues; that stretch reads LSSSPESQHGGT. Ser1122 and Ser1123 each carry phosphoserine. Thr1131 carries the phosphothreonine modification. A Tyrosine-protein phosphatase domain is found at 1192–1452; sequence DTVWRELQDA…RFCYEAVVRH (261 aa). Cys1392 functions as the Phosphocysteine intermediate in the catalytic mechanism. Residues 1513-1636 form a disordered region; that stretch reads LESPVASLPG…LDPLWTLNKT (124 aa). Pro residues-rich tracts occupy residues 1523–1533 and 1542–1556; these read PAEPPGLPPAS and SSSPPPLSSPLPEAP. Positions 1567 to 1587 are enriched in low complexity; the sequence is APSSGPPSSSLELLASLTPEA. Position 1615 is an omega-N-methylarginine (Arg1615).

This sequence belongs to the protein-tyrosine phosphatase family. Non-receptor class subfamily. As to quaternary structure, interacts with GRAP2 and GRB2. Interacts with UBAP1. Interacts with CHMP4B.

The protein resides in the nucleus. Its subcellular location is the cytoplasm. It localises to the cytoplasmic vesicle. It is found in the endosome. The protein localises to the cytoskeleton. The protein resides in the cilium basal body. Its subcellular location is the early endosome. The catalysed reaction is O-phospho-L-tyrosyl-[protein] + H2O = L-tyrosyl-[protein] + phosphate. In terms of biological role, plays a role in sorting of endocytic ubiquitinated cargos into multivesicular bodies (MVBs) via its interaction with the ESCRT-I complex (endosomal sorting complex required for transport I), and possibly also other ESCRT complexes. May act as a negative regulator of Ras-mediated mitogenic activity. Plays a role in ciliogenesis. This chain is Tyrosine-protein phosphatase non-receptor type 23 (PTPN23), found in Homo sapiens (Human).